A 236-amino-acid chain; its full sequence is Baculoviral IAP repeat-containing protein 8 (236 aa).

The BIR repeat unit spans residues 7–70 (RLITFGTWMY…KWYPGCKYLL (64 aa)). Zn(2+) contacts are provided by Cys-39, Cys-42, His-59, and Cys-66. Residues 189-224 (CKICMDRHIAVVFIPCGHLVTCKQCAEAVDRCPMCS) form an RING-type zinc finger.

It belongs to the IAP family. As to quaternary structure, binds to caspase-9.

It localises to the cytoplasm. In terms of biological role, protects against apoptosis mediated by BAX. The sequence is that of Baculoviral IAP repeat-containing protein 8 (BIRC8) from Pan troglodytes (Chimpanzee).